A 749-amino-acid chain; its full sequence is NAD(P)H-quinone oxidoreductase subunit 5, chloroplastic (749 aa).

16 helical membrane passes run 9 to 29 (WIIP…LLLF), 40 to 60 (WSFT…NLSI), 89 to 109 (IDPL…MVLI), 125 to 145 (FAYM…SNLI), 147 to 167 (IYIF…FWFT), 185 to 205 (GDFG…SFEF), 221 to 241 (NGTN…GAVA), 260 to 280 (TPIS…FLVA), 285 to 305 (LFIV…ITIL), 329 to 349 (LGYT…FHLI), 356 to 376 (ALLF…VGYS), 398 to 418 (NTFL…CFWS), 427 to 447 (WLYS…TAFY), 553 to 573 (LFPL…GIPF), 607 to 627 (FVIN…LASL), and 727 to 747 (SYLF…YFFL).

This sequence belongs to the complex I subunit 5 family. NDH is composed of at least 16 different subunits, 5 of which are encoded in the nucleus.

The protein resides in the plastid. The protein localises to the chloroplast thylakoid membrane. It catalyses the reaction a plastoquinone + NADH + (n+1) H(+)(in) = a plastoquinol + NAD(+) + n H(+)(out). The catalysed reaction is a plastoquinone + NADPH + (n+1) H(+)(in) = a plastoquinol + NADP(+) + n H(+)(out). Its function is as follows. NDH shuttles electrons from NAD(P)H:plastoquinone, via FMN and iron-sulfur (Fe-S) centers, to quinones in the photosynthetic chain and possibly in a chloroplast respiratory chain. The immediate electron acceptor for the enzyme in this species is believed to be plastoquinone. Couples the redox reaction to proton translocation, and thus conserves the redox energy in a proton gradient. The sequence is that of NAD(P)H-quinone oxidoreductase subunit 5, chloroplastic (ndhF) from Vitis vinifera (Grape).